Consider the following 372-residue polypeptide: tRNA pseudouridine synthase D (372 aa).

D85 serves as the catalytic Nucleophile. The TRUD domain occupies 160 to 330 (GFANYFGYQR…MQGSRRFMWG (171 aa)).

This sequence belongs to the pseudouridine synthase TruD family.

It carries out the reaction uridine(13) in tRNA = pseudouridine(13) in tRNA. Functionally, responsible for synthesis of pseudouridine from uracil-13 in transfer RNAs. This chain is tRNA pseudouridine synthase D, found in Campylobacter jejuni subsp. jejuni serotype O:2 (strain ATCC 700819 / NCTC 11168).